The primary structure comprises 387 residues: Lipid-A-disaccharide synthase (387 aa).

Belongs to the LpxB family.

The enzyme catalyses 2-N,3-O-bis[(3R)-3-hydroxytetradecanoyl]-alpha-D-glucosaminyl 1-phosphate + UDP-2-N,3-O-bis[(3R)-3-hydroxytetradecanoyl]-alpha-D-glucosamine = lipid A disaccharide (E. coli) + UDP + H(+). The catalysed reaction is a lipid X + a UDP-2-N,3-O-bis[(3R)-3-hydroxyacyl]-alpha-D-glucosamine = a lipid A disaccharide + UDP + H(+). Its pathway is glycolipid biosynthesis; lipid IV(A) biosynthesis; lipid IV(A) from (3R)-3-hydroxytetradecanoyl-[acyl-carrier-protein] and UDP-N-acetyl-alpha-D-glucosamine: step 5/6. In terms of biological role, condensation of UDP-2,3-diacylglucosamine and 2,3-diacylglucosamine-1-phosphate to form lipid A disaccharide, a precursor of lipid A, a phosphorylated glycolipid that anchors the lipopolysaccharide to the outer membrane of the cell. The chain is Lipid-A-disaccharide synthase from Blochmanniella pennsylvanica (strain BPEN).